The sequence spans 246 residues: Probable transcriptional regulatory protein KPK_1906 (246 aa).

The protein belongs to the TACO1 family.

The protein localises to the cytoplasm. The protein is Probable transcriptional regulatory protein KPK_1906 of Klebsiella pneumoniae (strain 342).